Here is a 485-residue protein sequence, read N- to C-terminus: UDP-N-acetylmuramoyl-L-alanyl-D-glutamate--2,6-diaminopimelate ligase (485 aa).

S30 lines the UDP-N-acetyl-alpha-D-muramoyl-L-alanyl-D-glutamate pocket. Position 111 to 117 (111 to 117) interacts with ATP; the sequence is GTNGKTT. Residues 153–154, S180, Q186, and R188 each bind UDP-N-acetyl-alpha-D-muramoyl-L-alanyl-D-glutamate; that span reads TT. K220 carries the post-translational modification N6-carboxylysine. Meso-2,6-diaminopimelate is bound by residues R378, 402-405, G455, and E459; that span reads DNPR. The short motif at 402–405 is the Meso-diaminopimelate recognition motif element; that stretch reads DNPR.

This sequence belongs to the MurCDEF family. MurE subfamily. The cofactor is Mg(2+). Carboxylation is probably crucial for Mg(2+) binding and, consequently, for the gamma-phosphate positioning of ATP.

It is found in the cytoplasm. The enzyme catalyses UDP-N-acetyl-alpha-D-muramoyl-L-alanyl-D-glutamate + meso-2,6-diaminopimelate + ATP = UDP-N-acetyl-alpha-D-muramoyl-L-alanyl-gamma-D-glutamyl-meso-2,6-diaminopimelate + ADP + phosphate + H(+). It functions in the pathway cell wall biogenesis; peptidoglycan biosynthesis. Functionally, catalyzes the addition of meso-diaminopimelic acid to the nucleotide precursor UDP-N-acetylmuramoyl-L-alanyl-D-glutamate (UMAG) in the biosynthesis of bacterial cell-wall peptidoglycan. The polypeptide is UDP-N-acetylmuramoyl-L-alanyl-D-glutamate--2,6-diaminopimelate ligase (Bacteroides fragilis (strain ATCC 25285 / DSM 2151 / CCUG 4856 / JCM 11019 / LMG 10263 / NCTC 9343 / Onslow / VPI 2553 / EN-2)).